Here is a 664-residue protein sequence, read N- to C-terminus: Serine/threonine-protein kinase PknD (664 aa).

Topologically, residues 1 to 381 are cytoplasmic; that stretch reads MSDAVPQVGS…PAGNKRKVWA (381 aa). Residues 15–276 enclose the Protein kinase domain; sequence YQLLRLLGRG…DLAIAAHDAL (262 aa). ATP-binding positions include 21-29 and Lys44; that span reads LGRGGMGEV. Residue Thr135 is modified to Phosphothreonine; by autocatalysis. Asp138 functions as the Proton acceptor in the catalytic mechanism. Phosphothreonine; by autocatalysis is present on residues Thr169, Thr171, Thr173, and Thr209. Residues 303–333 are disordered; the sequence is TGLSQSESGIAGAGTGPPTPGAARWSPGDSA. A helical membrane pass occupies residues 382 to 402; that stretch reads VVGAAAIVLVAIVAAAGYLVL. The Extracellular segment spans residues 403 to 664; the sequence is RPSWSPTQAS…GNDRVVKLTS (262 aa). NHL repeat units follow at residues 414-456, 457-497, 498-539, 540-581, 582-623, and 624-664; these read QTVL…LATG, STGT…LAAG, SNNQ…LAAG, SKTQ…LEAE, SNNQ…LLAG, and STTS…KLTS.

Belongs to the protein kinase superfamily. Ser/Thr protein kinase family. As to quaternary structure, homodimer. The extracellular domain interacts with host laminin. Autophosphorylated. Dephosphorylated by PstP.

It localises to the cell membrane. The enzyme catalyses L-seryl-[protein] + ATP = O-phospho-L-seryl-[protein] + ADP + H(+). The catalysed reaction is L-threonyl-[protein] + ATP = O-phospho-L-threonyl-[protein] + ADP + H(+). With respect to regulation, dimerization activates the kinase domain of unphosphorylated PknD via an allosteric mechanism, triggering autophosphorylation and phosphorylation of target proteins. Phosphorylated PknD is fully active even in the absence of dimerization. Part of a signaling pathway that enables adaptation to osmotic stress through cell wall remodeling and virulence factor production. Its function is as follows. Key microbial factor required for central nervous system tuberculosis. Required for invasion of host brain endothelia, but not macrophages, lung epithelia or other endothelia. The chain is Serine/threonine-protein kinase PknD (pknD) from Mycobacterium tuberculosis (strain CDC 1551 / Oshkosh).